The sequence spans 73 residues: Small ribosomal subunit protein eS27 (73 aa).

Zn(2+) contacts are provided by C28, C31, C47, and C50. A C4-type zinc finger spans residues 28–50 (CPKCGNRQVVFSHSTFRARCLNC).

Belongs to the eukaryotic ribosomal protein eS27 family. Part of the 30S ribosomal subunit. It depends on Zn(2+) as a cofactor.

This is Small ribosomal subunit protein eS27 from Aeropyrum pernix (strain ATCC 700893 / DSM 11879 / JCM 9820 / NBRC 100138 / K1).